We begin with the raw amino-acid sequence, 546 residues long: Arginine--tRNA ligase (546 aa).

The 'HIGH' region signature appears at 122 to 132 (ANPTGPFTVGH).

It belongs to the class-I aminoacyl-tRNA synthetase family. As to quaternary structure, monomer.

It is found in the cytoplasm. It catalyses the reaction tRNA(Arg) + L-arginine + ATP = L-arginyl-tRNA(Arg) + AMP + diphosphate. The protein is Arginine--tRNA ligase of Thermotoga petrophila (strain ATCC BAA-488 / DSM 13995 / JCM 10881 / RKU-1).